Consider the following 368-residue polypeptide: MNKKTIVVKFGTSTLTQGSPKLNSPHMMEIVRQIAQLHNDGFRIVIVTSGAIAAGRHYLNHPQLPPTIASKQLLAAVGQSQLIQAWEKLFAIYDIHIGQLLLTRADIEDRERFLNARDTLYALLDNHIIPVINENDAVATAEIKVGDNDNLSALVAILVQAEQLYLLTDQQGLFDSDPRKNPEAKLIPVVEQITDHIRSIAGGSGTNLGTGGMMTKIIAADVATRSGIETIIAPGNRPNVIADLAYEQNIGTKFIAHQSDRLESRKQWLFAAPSAGIITIDNGAQNAILEQNKSLLPAGIINVEGRFSRGEVVKIRTQSGKDIALGMPRYNSDALQLIKGRKSADIENVLGYEYGAVAMHRDDMIILS.

Residue Lys9 participates in ATP binding. 3 residues coordinate substrate: Ser49, Asp136, and Asn148. Residues 168 to 169 (TD) and 210 to 216 (TGGMMTK) contribute to the ATP site. A PUA domain is found at 275-353 (AGIITIDNGA…ADIENVLGYE (79 aa)).

It belongs to the glutamate 5-kinase family.

It is found in the cytoplasm. It catalyses the reaction L-glutamate + ATP = L-glutamyl 5-phosphate + ADP. It functions in the pathway amino-acid biosynthesis; L-proline biosynthesis; L-glutamate 5-semialdehyde from L-glutamate: step 1/2. Its function is as follows. Catalyzes the transfer of a phosphate group to glutamate to form L-glutamate 5-phosphate. This is Glutamate 5-kinase from Haemophilus influenzae (strain ATCC 51907 / DSM 11121 / KW20 / Rd).